The following is a 1473-amino-acid chain: Collagen alpha-1(XVII) chain (1473 aa).

Basic and acidic residues predominate over residues 1 to 19 (MDITQKNKRDGTEVTERII). Disordered regions lie at residues 1-155 (MDIT…PSTR) and 168-188 (GSRSASVSPTRNSSNTLPIPK). At 1-474 (MDITQKNKRD…CGSWCSWWKW (474 aa)) the chain is on the cytoplasmic side. The segment at 1-572 (MDITQKNKRD…MTEQENGNLR (572 aa)) is nonhelical region (NC16). Polar residues-rich tracts occupy residues 57–96 (LTHGSSGYINSSGSLRGNASTSSYRRAHSPASTLPNSPGS), 111–120 (EGSSSGNSSP), and 170–184 (RSASVSPTRNSSNTL). Residues 146 to 231 (RLQSASPSTR…WSSTLPAGSS (86 aa)) are necessary for interaction with DST and for the recruitment of DST to hemidesmosome. The chain crosses the membrane as a helical; Signal-anchor for type II membrane protein span at residues 475 to 495 (LLGLLLTWLLLLGLLFGLIAL). Topologically, residues 496–1473 (AEEVRKLKAR…RRRRSIAVKP (978 aa)) are extracellular. 3 disordered regions span residues 567–1017 (ENGN…LSSS), 1173–1234 (FRGI…ISGA), and 1261–1308 (SFIV…SSMG). The interval 573–1459 (GSPGPKGDMG…KGEKGDKGDQ (887 aa)) is triple-helical region. Low complexity-rich tracts occupy residues 619–638 (EPGMEGPMGQRGREGPMGPR), 667–678 (PGSVGPKGSIGP), 729–742 (EPGAKGAMGPAGPD), and 769–790 (PGKPGLTGPQGPQGIPGTPGRP). Pro residues predominate over residues 814-835 (PGPPGPPGAMGPPGPPGAPGPV). Composition is skewed to low complexity over residues 837 to 847 (PAGLPGQQGPR) and 854 to 866 (GESFMGSSSSFSE). Pro residues-rich tracts occupy residues 878-899 (PPGPPGPPGPPGEGLPGPPGPP) and 913-922 (PPGPPGPPGP). Positions 940–957 (FPGLSGSGSSSLGLNLQG) are enriched in low complexity. 2 stretches are compositionally biased toward pro residues: residues 1001-1011 (PPGPPGPPGPP) and 1179-1188 (PPGPPGPPGL). Polar residues predominate over residues 1198–1210 (TEDLSSYLQTAGL). Composition is skewed to pro residues over residues 1214–1228 (PGPPGPPGPPGPRGP) and 1266–1275 (PPGPPGPQGP). The span at 1283–1307 (STDSSYSRSGSSSSFSRDTSYSSSM) shows a compositional bias: low complexity. N1404 carries N-linked (GlcNAc...) asparagine glycosylation. Residues 1417–1473 (GAIPGPPGQKGEMGIPGPKGERGPAGPPGPRGHKGEKGDKGDQFYIGRRRRSIAVKP) form a disordered region. Residues 1449 to 1458 (HKGEKGDKGD) show a composition bias toward basic and acidic residues. Residues 1460 to 1473 (FYIGRRRRSIAVKP) form a nonhelical region (NC1) region. The segment covering 1463–1473 (GRRRRSIAVKP) has biased composition (basic residues).

As to quaternary structure, homotrimers of alpha 1(XVII)chains. Interacts (via cytoplasmic region) with ITGB4 (via cytoplasmic region). Interacts (via cytoplasmic region) with DST (via N-terminus). Interacts (via N-terminus) with PLEC. Interacts (via cytoplasmic region) with DSP. The intracellular/endo domain is disulfide-linked. In terms of processing, prolines at the third position of the tripeptide repeating unit (G-X-Y) are hydroxylated in some or all of the chains. Post-translationally, the ectodomain is shedded from the surface of keratinocytes resulting in a 120-kDa soluble form, also named as 120 kDa linear IgA disease antigen homolog. The shedding is mediated by membrane-bound metalloproteases.

The protein localises to the cell junction. The protein resides in the hemidesmosome. It is found in the membrane. Its subcellular location is the secreted. It localises to the extracellular space. The protein localises to the extracellular matrix. The protein resides in the basement membrane. Its function is as follows. May play a role in the integrity of hemidesmosome and the attachment of basal keratinocytes to the underlying basement membrane. The 120 kDa linear IgA disease antigen homolog is an anchoring filament component involved in dermal-epidermal cohesion. This Bos taurus (Bovine) protein is Collagen alpha-1(XVII) chain (COL17A1).